A 56-amino-acid chain; its full sequence is Large ribosomal subunit protein bL33B (56 aa).

It belongs to the bacterial ribosomal protein bL33 family.

This chain is Large ribosomal subunit protein bL33B, found in Cutibacterium acnes (strain DSM 16379 / KPA171202) (Propionibacterium acnes).